A 287-amino-acid chain; its full sequence is Bifunctional protein FolD (287 aa).

NADP(+) contacts are provided by residues 165–167 (GRS), Ser190, and Ile231.

This sequence belongs to the tetrahydrofolate dehydrogenase/cyclohydrolase family. As to quaternary structure, homodimer.

The catalysed reaction is (6R)-5,10-methylene-5,6,7,8-tetrahydrofolate + NADP(+) = (6R)-5,10-methenyltetrahydrofolate + NADPH. It carries out the reaction (6R)-5,10-methenyltetrahydrofolate + H2O = (6R)-10-formyltetrahydrofolate + H(+). It participates in one-carbon metabolism; tetrahydrofolate interconversion. Functionally, catalyzes the oxidation of 5,10-methylenetetrahydrofolate to 5,10-methenyltetrahydrofolate and then the hydrolysis of 5,10-methenyltetrahydrofolate to 10-formyltetrahydrofolate. The chain is Bifunctional protein FolD from Carboxydothermus hydrogenoformans (strain ATCC BAA-161 / DSM 6008 / Z-2901).